Here is a 164-residue protein sequence, read N- to C-terminus: Kunitz-type proteinase inhibitor BbCI (164 aa).

This sequence belongs to the protease inhibitor I3 (leguminous Kunitz-type inhibitor) family.

The protein resides in the secreted. Inhibits T.cruzi cruzipain. The protein is Kunitz-type proteinase inhibitor BbCI of Bauhinia bauhinioides (Perlebia bauhinoides).